A 407-amino-acid polypeptide reads, in one-letter code: MKRVVITGFGIISSIGNNKKEVLNSLYNGISGITFSEEMKESGMRSQVWGNIKLENKKFFKKNKISRFMNNGSIYAFLSMEQAIKDANLQTKQYQKNPRIGIIAGSGGGFPKYHIQGIDAIRSNRGLNSVSPYIAIKAMNSGISACLSTLFKIYGVNYSISSACATSGHCIGNAFELIKFGKQDLIFAGGGEEVSWELAYEFDAMKALSSNFNKNPTKSSRVYDVNRDGFVISGGGGIIVIEELNCALSRSAHIYAEIIGYAATSDGKDMVVPSGDGAVRCMNLAKKQNKMLFIDYLNVHGTSTKIGDLIELEAIKKSFFHEKKPMISATKSMTGHALGVSGVHEIIYTLLMMKYNFIAPSINIETIEPSADNMNIVQKTFHKKIKTALSNSFGFGGTNVSLILKKY.

Residues 1–406 (MKRVVITGFG…GTNVSLILKK (406 aa)) enclose the Ketosynthase family 3 (KS3) domain. Active-site for beta-ketoacyl synthase activity residues include C164, H300, and H336.

It belongs to the thiolase-like superfamily. Beta-ketoacyl-ACP synthases family. As to quaternary structure, homodimer.

The protein localises to the cytoplasm. The enzyme catalyses a fatty acyl-[ACP] + malonyl-[ACP] + H(+) = a 3-oxoacyl-[ACP] + holo-[ACP] + CO2. The catalysed reaction is (3Z)-decenoyl-[ACP] + malonyl-[ACP] + H(+) = 3-oxo-(5Z)-dodecenoyl-[ACP] + holo-[ACP] + CO2. It participates in lipid metabolism; fatty acid biosynthesis. In terms of biological role, involved in the type II fatty acid elongation cycle. Catalyzes the elongation of a wide range of acyl-ACP by the addition of two carbons from malonyl-ACP to an acyl acceptor. Can also use unsaturated fatty acids. Catalyzes a key reaction in unsaturated fatty acid (UFA) synthesis, the elongation of the cis-3-decenoyl-ACP produced by FabA. The chain is 3-oxoacyl-[acyl-carrier-protein] synthase 1 (fabB) from Buchnera aphidicola subsp. Schizaphis graminum (strain Sg).